A 363-amino-acid chain; its full sequence is Oxygen-dependent coproporphyrinogen-III oxidase (363 aa).

Residue serine 119 participates in substrate binding. A divalent metal cation-binding residues include histidine 123 and histidine 133. Histidine 133 (proton donor) is an active-site residue. 135-137 (NYR) provides a ligand contact to substrate. Histidine 167 and histidine 197 together coordinate a divalent metal cation. The segment at 287–322 (YVEFNLVWDRGTIFGLQTNGRTESILMSLPPLVRWE) is important for dimerization.

This sequence belongs to the aerobic coproporphyrinogen-III oxidase family. In terms of assembly, homodimer. Requires a divalent metal cation as cofactor.

The protein resides in the cytoplasm. It carries out the reaction coproporphyrinogen III + O2 + 2 H(+) = protoporphyrinogen IX + 2 CO2 + 2 H2O. It participates in porphyrin-containing compound metabolism; protoporphyrin-IX biosynthesis; protoporphyrinogen-IX from coproporphyrinogen-III (O2 route): step 1/1. Functionally, involved in the heme and chlorophyll biosynthesis. Catalyzes the aerobic oxidative decarboxylation of propionate groups of rings A and B of coproporphyrinogen-III to yield the vinyl groups in protoporphyrinogen-IX. In Parasynechococcus marenigrum (strain WH8102), this protein is Oxygen-dependent coproporphyrinogen-III oxidase.